The primary structure comprises 409 residues: LL-diaminopimelate aminotransferase (409 aa).

Substrate is bound by residues Tyr-15 and Gly-42. Pyridoxal 5'-phosphate-binding positions include Tyr-72, 108–109 (AK), Tyr-132, Asn-186, Tyr-217, and 245–247 (SFS). Substrate is bound by residues Lys-109, Tyr-132, and Asn-186. Residue Lys-248 is modified to N6-(pyridoxal phosphate)lysine. 2 residues coordinate pyridoxal 5'-phosphate: Arg-256 and Asn-291. Asn-291 and Arg-387 together coordinate substrate.

Belongs to the class-I pyridoxal-phosphate-dependent aminotransferase family. LL-diaminopimelate aminotransferase subfamily. Homodimer. Pyridoxal 5'-phosphate is required as a cofactor.

It catalyses the reaction (2S,6S)-2,6-diaminopimelate + 2-oxoglutarate = (S)-2,3,4,5-tetrahydrodipicolinate + L-glutamate + H2O + H(+). Its pathway is amino-acid biosynthesis; L-lysine biosynthesis via DAP pathway; LL-2,6-diaminopimelate from (S)-tetrahydrodipicolinate (aminotransferase route): step 1/1. In terms of biological role, involved in the synthesis of meso-diaminopimelate (m-DAP or DL-DAP), required for both lysine and peptidoglycan biosynthesis. Catalyzes the direct conversion of tetrahydrodipicolinate to LL-diaminopimelate. The chain is LL-diaminopimelate aminotransferase from Phocaeicola vulgatus (strain ATCC 8482 / DSM 1447 / JCM 5826 / CCUG 4940 / NBRC 14291 / NCTC 11154) (Bacteroides vulgatus).